A 394-amino-acid polypeptide reads, in one-letter code: Elongation factor Tu 1 (394 aa).

Residues 10-204 (KPHVNVGTIG…FLDSYIPEPE (195 aa)) enclose the tr-type G domain. A G1 region spans residues 19 to 26 (GHVDHGKT). 19 to 26 (GHVDHGKT) is a binding site for GTP. Thr26 contributes to the Mg(2+) binding site. The interval 60-64 (GITIN) is G2. Residues 81 to 84 (DCPG) form a G3 region. GTP-binding positions include 81 to 85 (DCPGH) and 136 to 139 (NKCD). Positions 136 to 139 (NKCD) are G4. Residues 174 to 176 (SAL) are G5.

Belongs to the TRAFAC class translation factor GTPase superfamily. Classic translation factor GTPase family. EF-Tu/EF-1A subfamily. As to quaternary structure, monomer.

It is found in the cytoplasm. It carries out the reaction GTP + H2O = GDP + phosphate + H(+). In terms of biological role, GTP hydrolase that promotes the GTP-dependent binding of aminoacyl-tRNA to the A-site of ribosomes during protein biosynthesis. This chain is Elongation factor Tu 1, found in Shigella flexneri serotype 5b (strain 8401).